The following is a 1450-amino-acid chain: MEYEKSPTATTFSRKISNNRSHSLSFSANAVYDGVFSSPVNSKSPLVDYGEIFRGSGPSPSSIPFLDVPELNVGKVKVDVRSSKLDYSSVFGGLGACDFAVTPKEVIIKSEKKTSINEDKKRNRRKGGNSSDVPLCNEGKKSPEMVRMKHSDISYHQTVPRNENGATHLTQVPATMPGPIPTQVVDNTSLLHKIESKSTPIPAVEKKLPCNEGREEVKASRKQGSKTEVDFENIFARDGCSTRDDSTCKTVSNGEYRDVKPPSSFQCTLNGEHGASERLSGLNSGPSERYETEDADSPSSPPYFDAETDENSVAAESSAALKKAIEEAQIRMNIAKQMMEKKKSGFRSCAKLKSCDDSKIENKGNTKVEGITEESRDNNSQILGEMVKPSEQSFSNEGDQHAKRARKLWGVPEGLLKSTSDHKPEELEEQDIITLEEEQARRGRKHWELPGGIFKSVMNSKQQEPENLAPAKPEPDTKQEVQPITENPFYTFGQLGSKLKCVVEAFTGSKVSQKDEKQFTEKENSTVTQMVQDEESDSQEMLAGIPVIETYLREVEETPQQTESKSEMNIEEKSESTICAFTERSSQNMEKETGWQVKSACKFEDGSGVKDFQENGDHTCNVLDQEGEKEIVSEPQEMLVGPDDSKTYVREVEETPTPSLNKTQSDDSVGAMVSFNRVNISEPGNIDEVQEAVHKVPRRRRVWKTSEDVYNMIKAPKGNNRPWQLESAENETTAMSFHEEGVRIHHASEEIESTSGQASDSGLQENWTVLKQMFRQMFQTADTKGEDETYCLVESERGHLDIHQKAQEKYEQVEVETVRTNYEAYAHTRENEDESAQETYCRKEDGKVEVQGKTSLVRELIGEELEMASLEEEDVQEASEEAGWVQGLSELNEINEHADSHAEMLEYDRSETDSNNSRERFDQTQEQAEETMIDGSIDTDTSRSSFEMRQGDSYIEEVGIEQHRSDQFPEKASAVSNTEEHIEEIDSDSIQSGWSVVEDDDRSLQDGGASQAESKHDELEETKEESDEMKTSLGVERNGDKKELEHQFECQENETYRSNVEAAESSCRFPNGEEIIGAATNGNMKENEGEEGEESCRSSMEEEGDATSDIGAATDGNMKENEGEESCRSSMEEEGDATSDISQNKAETVEEHLKKIDETREKERERKQERVMVERAIREARERAFADAMERAGKTAMEKAKAVAHRREVPRKSEKGSVEVNDKLSSAEKASMQAKLRAERAAVERAITEVRERAMEKALSGKSAASQAKSYGGSKSFSSSGERRGSSSSGTENKSSGPSNSSNQTAKGEPIQRCKARSERHQRTSDRAAEALAEKKLRDLKTQKEQTERNRLAEALDADVKRWSSGKENNLRALISTLQYILGAESGWKPIPLTDLVSSASVRKAYRKATLYVHPDKLQQRGASTQQKYICEKVFDLLKEAWNKFGADER.

Disordered stretches follow at residues 117–142 (NEDKKRNRRKGGNSSDVPLCNEGKKS), 241–318 (STRD…AESS), 357–383 (DSKIENKGNTKVEGITEESRDNNSQIL), 459–480 (NSKQQEPENLAPAKPEPDTKQE), 512–541 (SQKDEKQFTEKENSTVTQMVQDEESDSQEM), 556–575 (EETPQQTESKSEMNIEEKSE), 908–946 (DRSETDSNNSRERFDQTQEQAEETMIDGSIDTDTSRSSF), 961–1046 (EQHR…ELEH), 1077–1168 (GAAT…ERKQ), 1192–1241 (AGKT…AERA), and 1254–1328 (AMEK…SDRA). A coiled-coil region spans residues 316-344 (ESSAALKKAIEEAQIRMNIAKQMMEKKKS). Residues 357-366 (DSKIENKGNT) show a composition bias toward basic and acidic residues. Composition is skewed to basic and acidic residues over residues 512 to 524 (SQKDEKQFTEKEN), 564 to 575 (SKSEMNIEEKSE), 908 to 923 (DRSETDSNNSRERFDQ), 1037 to 1046 (RNGDKKELEH), 1117 to 1131 (NMKENEGEESCRSSM), 1147 to 1168 (ETVEEHLKKIDETREKERERKQ), and 1192 to 1226 (AGKTAMEKAKAVAHRREVPRKSEKGSVEVNDKLSS). 2 coiled-coil regions span residues 1142–1184 (SQNK…RERA) and 1219–1257 (EVNDKLSSAEKASMQAKLRAERAAVERAITEVRERAMEK). The segment covering 1270 to 1299 (SYGGSKSFSSSGERRGSSSSGTENKSSGPS) has biased composition (low complexity). Residues 1310–1328 (PIQRCKARSERHQRTSDRA) show a composition bias toward basic and acidic residues. Positions 1327 to 1355 (RAAEALAEKKLRDLKTQKEQTERNRLAEA) form a coiled coil. A J domain is found at 1377-1450 (TLQYILGAES…AWNKFGADER (74 aa)).

The sequence is that of Auxilin-like protein 1 (AUL1) from Arabidopsis thaliana (Mouse-ear cress).